The sequence spans 202 residues: Snake venom metalloproteinase Ac1 (202 aa).

Residues 6 to 202 (RYMEIVIVVD…ENPPCILNKP (197 aa)) enclose the Peptidase M12B domain. Ca(2+) contacts are provided by Glu-9 and Asp-93. Intrachain disulfides connect Cys-117/Cys-197 and Cys-157/Cys-181. His-142 lines the Zn(2+) pocket. Glu-143 is an active-site residue. His-146 and His-152 together coordinate Zn(2+). Residues Cys-197 and Asn-200 each contribute to the Ca(2+) site.

Belongs to the venom metalloproteinase (M12B) family. P-I subfamily. As to quaternary structure, monomer. Zn(2+) serves as cofactor. In terms of tissue distribution, expressed by the venom gland.

Its subcellular location is the secreted. Its function is as follows. Snake venom metalloproteinase that impairs hemostasis in the envenomed animal. The polypeptide is Snake venom metalloproteinase Ac1 (Deinagkistrodon acutus (Hundred-pace snake)).